Consider the following 313-residue polypeptide: HPr kinase/phosphorylase (313 aa).

Active-site residues include histidine 140 and lysine 161. 155–162 (GNSGAGKS) contacts ATP. Mg(2+) is bound at residue serine 162. Aspartate 179 (proton acceptor; for phosphorylation activity. Proton donor; for dephosphorylation activity) is an active-site residue. The segment at 203-212 (IEVRGLGILN) is important for the catalytic mechanism of both phosphorylation and dephosphorylation. Residue glutamate 204 participates in Mg(2+) binding. Arginine 246 is an active-site residue. The tract at residues 267-272 (PVAAGR) is important for the catalytic mechanism of dephosphorylation.

The protein belongs to the HPrK/P family. Homohexamer. The cofactor is Mg(2+).

The catalysed reaction is [HPr protein]-L-serine + ATP = [HPr protein]-O-phospho-L-serine + ADP + H(+). The enzyme catalyses [HPr protein]-O-phospho-L-serine + phosphate + H(+) = [HPr protein]-L-serine + diphosphate. Catalyzes the ATP- as well as the pyrophosphate-dependent phosphorylation of a specific serine residue in HPr, a phosphocarrier protein of the phosphoenolpyruvate-dependent sugar phosphotransferase system (PTS). HprK/P also catalyzes the pyrophosphate-producing, inorganic phosphate-dependent dephosphorylation (phosphorolysis) of seryl-phosphorylated HPr (P-Ser-HPr). This chain is HPr kinase/phosphorylase, found in Aromatoleum aromaticum (strain DSM 19018 / LMG 30748 / EbN1) (Azoarcus sp. (strain EbN1)).